The primary structure comprises 450 residues: Tubulin alpha-1 chain (450 aa).

Residues Gln11, Glu71, Gly144, Thr145, Thr179, Asn206, and Asn228 each contribute to the GTP site. Residue Glu71 participates in Mg(2+) binding. Glu254 is an active-site residue.

This sequence belongs to the tubulin family. Dimer of alpha and beta chains. A typical microtubule is a hollow water-filled tube with an outer diameter of 25 nm and an inner diameter of 15 nM. Alpha-beta heterodimers associate head-to-tail to form protofilaments running lengthwise along the microtubule wall with the beta-tubulin subunit facing the microtubule plus end conferring a structural polarity. Microtubules usually have 13 protofilaments but different protofilament numbers can be found in some organisms and specialized cells. The cofactor is Mg(2+). Post-translationally, undergoes a tyrosination/detyrosination cycle, the cyclic removal and re-addition of a C-terminal tyrosine residue by the enzymes tubulin tyrosine carboxypeptidase (TTCP) and tubulin tyrosine ligase (TTL), respectively.

Its subcellular location is the cytoplasm. It is found in the cytoskeleton. It carries out the reaction GTP + H2O = GDP + phosphate + H(+). Tubulin is the major constituent of microtubules, a cylinder consisting of laterally associated linear protofilaments composed of alpha- and beta-tubulin heterodimers. Microtubules grow by the addition of GTP-tubulin dimers to the microtubule end, where a stabilizing cap forms. Below the cap, tubulin dimers are in GDP-bound state, owing to GTPase activity of alpha-tubulin. This chain is Tubulin alpha-1 chain (TUBA1), found in Hordeum vulgare (Barley).